Here is a 313-residue protein sequence, read N- to C-terminus: L-2-hydroxycarboxylate dehydrogenase (NAD(P)(+)) (313 aa).

NADP(+) is bound by residues 7-13 (GASGRVG) and 34-37 (REHS). Positions 86 and 92 each coordinate substrate. NADP(+) is bound by residues N99 and 121–123 (ITN). Residues N123 and R154 each contribute to the substrate site. The active-site Proton acceptor is the H178.

It belongs to the LDH/MDH superfamily. Homotetramer.

Its subcellular location is the cytoplasm. It catalyses the reaction a (2S)-2-hydroxycarboxylate + NAD(+) = a 2-oxocarboxylate + NADH + H(+). It carries out the reaction a (2S)-2-hydroxycarboxylate + NADP(+) = a 2-oxocarboxylate + NADPH + H(+). Its function is as follows. Catalyzes the reversible oxidation of (S)-malate and (S)-sulfolactate to oxaloacetate and sulfopyruvate, respectively. Can use both NADH and NADPH, although activity is higher with NADPH. Oxidation of (S)-sulfolactate is observed only in the presence of NADP(+). Can also oxidize tartrate. Cannot reduce pyruvate, nor alpha-ketoglutarate. The chain is L-2-hydroxycarboxylate dehydrogenase (NAD(P)(+)) (mdh) from Methanocaldococcus jannaschii (strain ATCC 43067 / DSM 2661 / JAL-1 / JCM 10045 / NBRC 100440) (Methanococcus jannaschii).